We begin with the raw amino-acid sequence, 312 residues long: Aquaporin-6 (312 aa).

At 1-50 (MDDKFDDDALPNSKTTAKDYEDKLPEYDYTTTFPNTWMRLREPFREYFAE) the chain is on the cytoplasmic side. The chain crosses the membrane as a helical span at residues 51–71 (FVGVAVLIIFGVGADCQVVLS). The Extracellular segment spans residues 72–89 (ANTGVASSPKGSYLSLNC). A helical membrane pass occupies residues 90 to 110 (GWAIGTAMGVWISGGISGGHI). An NPA 1 motif is present at residues 111–113 (NPA). Residues 111–128 (NPAVTLAMATWRGFPWWK) are Cytoplasmic-facing. Residues 129-149 (VPGFIFAQLLGGIVGAGLVYV) form a helical membrane-spanning segment. At 150 to 183 (NYIHAIDIVEGGRHIRTLDTAGLFATYAADYMTN) the chain is on the extracellular side. N-linked (GlcNAc...) asparagine glycosylation is present at N183. A helical transmembrane segment spans residues 184–204 (LSCFFSEFLATAVLIIVIHAM). Residues 205–213 (NDKRNTPPP) are Cytoplasmic-facing. A helical transmembrane segment spans residues 214–234 (AGIVPFVLFFLILGIGASLGM). The Extracellular segment spans residues 235–267 (ETGYAINPARDLGPRMLTAMVGYGRQVFAFRNQ). Positions 241–243 (NPA) match the NPA 2 motif. Residues 268 to 288 (YWIWCPVLAPFLGAQVGTIFY) form a helical membrane-spanning segment. The Cytoplasmic portion of the chain corresponds to 289-312 (DLFFYKGQDNVFGRLGSHIHISPA).

This sequence belongs to the MIP/aquaporin (TC 1.A.8) family.

The protein localises to the membrane. The catalysed reaction is H2O(in) = H2O(out). Its function is as follows. Water channel required to facilitate the transport of water across membranes. Does not mediate the transport carbon dioxide nor nitric oxide across the membrane. Plays a key role in root water transport of mycorrhizal plant such ectomycorrhizal white spruce or trembling aspen via the hydration at the hyphal-root interphase. Contributes in fungal cellular processes during the basidiocarp formation. The polypeptide is Aquaporin-6 (Laccaria bicolor (Bicoloured deceiver)).